Here is a 281-residue protein sequence, read N- to C-terminus: Aldo-keto reductase MAP_3007 (281 aa).

The active-site Proton donor is Tyr-56. Positions 196, 234, 236, 237, 238, 245, and 272 each coordinate NADPH.

Belongs to the aldo/keto reductase family.

In Mycolicibacterium paratuberculosis (strain ATCC BAA-968 / K-10) (Mycobacterium paratuberculosis), this protein is Aldo-keto reductase MAP_3007.